The sequence spans 200 residues: MKTLVLGSTSPFRKTILEKLQLPFHCAKPNVDETEQKNESPQALVERLAIEKAKAVSSEYPNALIIGSDQVAVCEEEILGKPHNFDNAVVQLNKFSGKSITFYTGLCVYDSEKDKTIALVEPFIVHFNQLSQKDIANYLNAEQPYNCAGSFKSEGLGICLFSKLEGDDPNTLIGLPLIKLVGLLKQHGIDVLAEQSKLTV.

The Proton acceptor role is filled by Asp-69.

Belongs to the Maf family. YceF subfamily. Requires a divalent metal cation as cofactor.

It is found in the cytoplasm. The enzyme catalyses N(7)-methyl-GTP + H2O = N(7)-methyl-GMP + diphosphate + H(+). Its function is as follows. Nucleoside triphosphate pyrophosphatase that hydrolyzes 7-methyl-GTP (m(7)GTP). May have a dual role in cell division arrest and in preventing the incorporation of modified nucleotides into cellular nucleic acids. This Colwellia psychrerythraea (strain 34H / ATCC BAA-681) (Vibrio psychroerythus) protein is 7-methyl-GTP pyrophosphatase.